Reading from the N-terminus, the 236-residue chain is uncharacterized protein (236 aa).

This is an uncharacterized protein from Aquifex aeolicus (strain VF5).